Here is a 133-residue protein sequence, read N- to C-terminus: Small ribosomal subunit protein uS8 (133 aa).

It belongs to the universal ribosomal protein uS8 family. In terms of assembly, part of the 30S ribosomal subunit. Contacts proteins S5 and S12.

In terms of biological role, one of the primary rRNA binding proteins, it binds directly to 16S rRNA central domain where it helps coordinate assembly of the platform of the 30S subunit. This Prochlorococcus marinus (strain MIT 9312) protein is Small ribosomal subunit protein uS8.